The primary structure comprises 687 residues: MWCIVLLSLLAWVDAEPTMYGEILSPNYPQAYPNEVEKSWDIEVPEGYGIHLYFTHLDIELSENCAYDSVQIKSGGREEGKLCGQKTSKNPKSAVVEEFQVPYNKLQVIFTSDFSNEERFTGFAAYYVAVDVNECTDFADSPCSHFCNNYIGGYFCSCPPEYFLHEDKKNCGVNCSGDVFTTLIGEVASPNYPNPYPENSRCDYQILLEEGFQVVVTMRREDFDVEPADSGGHCPDSLIFVAGNQQFGPYCGNGFPGPLTIETKSNALNIIFQTDETEQKKGWKFRYHGDPIPCPKEVTANSFWEPEKAKYVFKDVVKITCLDGFEVVQGTVGSTSFYSTCQSNGKWSNSKLRCQPVDCGSPEPIPHGKVEDPEHTLFGSVTRYSCEQPYYYMETDGSEEYRCAGNGSWVNELLGAELPKCVPVCGIPSEPFKGMQRIFGGIITKIESFPWQVFFQNPRAGGALIDEQWVLTAAHVVEGNREPVMYVGSSSVVTSHLANGQMLTAERVFIHPGWEEQDASERKNFDNDIALVRLKDPVKMGPTVSPICLPGTSSDYDPSVGDLGLISGWGRTNTKDHVVKLRGAKLPVAPSDKCQEIKGTNPRIGTSSFVFTDNMICAGGRGVDSCNGDSGGAFAMQVPNEETPKFYVAGLVSWGPQCGTYGIYTRVKNYIDWIRETMQQNSAPSVD.

An N-terminal signal peptide occupies residues 1 to 15; sequence MWCIVLLSLLAWVDA. The 115-residue stretch at 16-130 folds into the CUB 1 domain; it reads EPTMYGEILS…TGFAAYYVAV (115 aa). Ca(2+) contacts are provided by Glu-60, Asp-68, Asp-113, Asp-131, Val-132, and Glu-134. Cysteines 65 and 83 form a disulfide. The EGF-like; calcium-binding domain occupies 131–172; it reads DVNECTDFADSPCSHFCNNYIGGYFCSCPPEYFLHEDKKNCG. 3 disulfide bridges follow: Cys-135-Cys-147, Cys-143-Cys-156, and Cys-158-Cys-171. Residues Asn-149, Tyr-150, and Gly-153 each contribute to the Ca(2+) site. Asn-149 is subject to (3R)-3-hydroxyasparagine. Asn-174 carries an N-linked (GlcNAc...) asparagine glycan. 9 cysteine pairs are disulfide-bonded: Cys-175-Cys-202, Cys-234-Cys-251, Cys-294-Cys-341, Cys-321-Cys-354, Cys-359-Cys-403, Cys-386-Cys-421, Cys-425-Cys-548, Cys-594-Cys-617, and Cys-626-Cys-658. The CUB 2 domain occupies 175 to 290; the sequence is CSGDVFTTLI…KGWKFRYHGD (116 aa). 2 Sushi domains span residues 292–356 and 357–423; these read IPCP…RCQP and VDCG…KCVP. An N-linked (GlcNAc...) asparagine glycan is attached at Asn-406. In terms of domain architecture, Peptidase S1 spans 438 to 679; sequence IFGGIITKIE…YIDWIRETMQ (242 aa). Active-site charge relay system residues include His-475 and Asp-528. The active-site Charge relay system is the Ser-630.

This sequence belongs to the peptidase S1 family. C1 is a calcium-dependent trimolecular complex of C1q, C1r and C1s in the molar ration of 1:2:2. Activated C1s is an disulfide-linked heterodimer of a heavy chain and a light chain. Post-translationally, the iron and 2-oxoglutarate dependent 3-hydroxylation of aspartate and asparagine is (R) stereospecific within EGF domains.

The catalysed reaction is Cleavage of Arg-|-Ala bond in complement component C4 to form C4a and C4b, and Lys(or Arg)-|-Lys bond in complement component C2 to form C2a and C2b: the 'classical' pathway C3 convertase.. Its activity is regulated as follows. Inhibited by SERPING1. Functionally, C1s B chain is a serine protease that combines with C1q and C1r to form C1, the first component of the classical pathway of the complement system. C1r activates C1s so that it can, in turn, activate C2 and C4. Also cleaves IGFBP5 and thereby inhibits the trophic effects of IGF1. In Sus scrofa (Pig), this protein is Complement C1s subcomponent.